Consider the following 462-residue polypeptide: Lysyl endopeptidase (462 aa).

An N-terminal signal peptide occupies residues 1–24 (MHKRTYLNACLVLALAAGASQALA). The propeptide occupies 25 to 211 (APGASEMAGD…VSYFADSLYK (187 aa)). Disulfide bonds link cysteine 224-cysteine 435, cysteine 230-cysteine 305, and cysteine 262-cysteine 284. Active-site charge relay system residues include histidine 283, aspartate 333, and serine 409.

The protein belongs to the peptidase S1 family. In terms of processing, experiments performed in E.coli. Processing of pro-endopeptidase to mature endopeptidase is probably autocatalytic, as mutations in the probable active site residues prevent processing, and purified inactive pro-endopeptidase disappears in the presence of active endopeptidase.

The protein resides in the secreted. It catalyses the reaction Preferential cleavage: Lys-|-Xaa, including Lys-|-Pro.. Lysine-specific endoprotease. Involved in corneal virulence. This Pseudomonas aeruginosa (strain ATCC 15692 / DSM 22644 / CIP 104116 / JCM 14847 / LMG 12228 / 1C / PRS 101 / PAO1) protein is Lysyl endopeptidase (prpL).